A 146-amino-acid chain; its full sequence is Ribonuclease H (146 aa).

The RNase H type-1 domain maps to 1-141; sequence MEKIDIFTDG…ADALANRGVE (141 aa). Mg(2+) is bound by residues aspartate 9, glutamate 47, aspartate 69, and aspartate 133.

This sequence belongs to the RNase H family. Monomer. Mg(2+) is required as a cofactor.

Its subcellular location is the cytoplasm. The catalysed reaction is Endonucleolytic cleavage to 5'-phosphomonoester.. Functionally, endonuclease that specifically degrades the RNA of RNA-DNA hybrids. In Herminiimonas arsenicoxydans, this protein is Ribonuclease H.